A 141-amino-acid polypeptide reads, in one-letter code: Hemoglobin subunit alpha (141 aa).

The 141-residue stretch at 1-141 (VLSPADKTNV…VSTVLTSKYR (141 aa)) folds into the Globin domain. Residue serine 3 is modified to Phosphoserine. Lysine 7 carries the N6-succinyllysine modification. A Phosphothreonine modification is found at threonine 8. At lysine 11 the chain carries N6-succinyllysine. The residue at position 16 (lysine 16) is an N6-acetyllysine; alternate. Lysine 16 is subject to N6-succinyllysine; alternate. Tyrosine 24 bears the Phosphotyrosine mark. Serine 35 is modified (phosphoserine). At lysine 40 the chain carries N6-succinyllysine. Residue serine 49 is modified to Phosphoserine. Histidine 58 contributes to the O2 binding site. Histidine 87 serves as a coordination point for heme b. Serine 102 is modified (phosphoserine). Threonine 108 is subject to Phosphothreonine. Residues serine 124 and serine 131 each carry the phosphoserine modification. Threonine 134 and threonine 137 each carry phosphothreonine. Phosphoserine is present on serine 138.

This sequence belongs to the globin family. Heterotetramer of two alpha chains and two beta chains. Red blood cells.

In terms of biological role, involved in oxygen transport from the lung to the various peripheral tissues. Its function is as follows. Hemopressin acts as an antagonist peptide of the cannabinoid receptor CNR1. Hemopressin-binding efficiently blocks cannabinoid receptor CNR1 and subsequent signaling. The chain is Hemoglobin subunit alpha (HBA) from Urocitellus parryii (Arctic ground squirrel).